The chain runs to 279 residues: Oxygen-dependent coproporphyrinogen-III oxidase (279 aa).

Serine 102 lines the substrate pocket. A divalent metal cation-binding residues include histidine 106 and histidine 116. Histidine 116 acts as the Proton donor in catalysis. 118–120 is a substrate binding site; the sequence is NTR. Histidine 149 and histidine 179 together coordinate a divalent metal cation. Positions 244-279 are important for dimerization; that stretch reads YVEFNLLYDRGTKFGLMTDGNVEAILMSLPPEVKFN.

Belongs to the aerobic coproporphyrinogen-III oxidase family. As to quaternary structure, homodimer. It depends on a divalent metal cation as a cofactor.

It localises to the cytoplasm. It catalyses the reaction coproporphyrinogen III + O2 + 2 H(+) = protoporphyrinogen IX + 2 CO2 + 2 H2O. It participates in porphyrin-containing compound metabolism; protoporphyrin-IX biosynthesis; protoporphyrinogen-IX from coproporphyrinogen-III (O2 route): step 1/1. In terms of biological role, involved in the heme biosynthesis. Catalyzes the aerobic oxidative decarboxylation of propionate groups of rings A and B of coproporphyrinogen-III to yield the vinyl groups in protoporphyrinogen-IX. This is Oxygen-dependent coproporphyrinogen-III oxidase from Rickettsia africae (strain ESF-5).